The following is a 92-amino-acid chain: Long neurotoxin 1 (92 aa).

An N-terminal signal peptide occupies residues 1–21 (MKILLLTLVVVTIVCLDLAYT). Intrachain disulfides connect cysteine 24/cysteine 41, cysteine 34/cysteine 62, cysteine 47/cysteine 51, cysteine 66/cysteine 77, and cysteine 78/cysteine 83.

The protein belongs to the three-finger toxin family. Long-chain subfamily. Type II alpha-neurotoxin sub-subfamily. In terms of tissue distribution, expressed by the venom gland.

Its subcellular location is the secreted. Binds with high affinity to muscular (alpha-1/CHRNA1) and neuronal (alpha-7/CHRNA7) nicotinic acetylcholine receptor (nAChR) and inhibits acetylcholine from binding to the receptor, thereby impairing neuromuscular and neuronal transmission. The polypeptide is Long neurotoxin 1 (Hydrophis hardwickii (Hardwick's spine-bellied seasnake)).